Reading from the N-terminus, the 395-residue chain is Elongation factor Tu (395 aa).

Residues 10-204 (KPHVNIGTIG…IVDEYIPTPE (195 aa)) enclose the tr-type G domain. The tract at residues 19–26 (GHVDHGKT) is G1. GTP is bound at residue 19–26 (GHVDHGKT). Threonine 26 is a binding site for Mg(2+). The tract at residues 60-64 (GITIN) is G2. The segment at 81–84 (DAPG) is G3. Residues 81–85 (DAPGH) and 136–139 (NKAD) each bind GTP. The tract at residues 136 to 139 (NKAD) is G4. The tract at residues 174–176 (SAL) is G5.

It belongs to the TRAFAC class translation factor GTPase superfamily. Classic translation factor GTPase family. EF-Tu/EF-1A subfamily. As to quaternary structure, monomer.

Its subcellular location is the cytoplasm. The enzyme catalyses GTP + H2O = GDP + phosphate + H(+). Its function is as follows. GTP hydrolase that promotes the GTP-dependent binding of aminoacyl-tRNA to the A-site of ribosomes during protein biosynthesis. The protein is Elongation factor Tu of Lactococcus lactis subsp. lactis (strain IL1403) (Streptococcus lactis).